A 333-amino-acid polypeptide reads, in one-letter code: Ketol-acid reductoisomerase (NADP(+)) (333 aa).

In terms of domain architecture, KARI N-terminal Rossmann spans 2 to 182 (AKMYYDSDAS…GCTRAGVLET (181 aa)). NADP(+)-binding positions include 25–28 (YGSQ), R48, S51, and 83–86 (DERQ). H108 is an active-site residue. NADP(+) is bound at residue G134. Residues 183–328 (TFKEETETDL…AELRAMMPFI (146 aa)) enclose the KARI C-terminal knotted domain. Mg(2+) is bound by residues D191, E195, E227, and E231. Residue S252 participates in substrate binding.

Belongs to the ketol-acid reductoisomerase family. Requires Mg(2+) as cofactor.

It catalyses the reaction (2R)-2,3-dihydroxy-3-methylbutanoate + NADP(+) = (2S)-2-acetolactate + NADPH + H(+). The catalysed reaction is (2R,3R)-2,3-dihydroxy-3-methylpentanoate + NADP(+) = (S)-2-ethyl-2-hydroxy-3-oxobutanoate + NADPH + H(+). Its pathway is amino-acid biosynthesis; L-isoleucine biosynthesis; L-isoleucine from 2-oxobutanoate: step 2/4. It participates in amino-acid biosynthesis; L-valine biosynthesis; L-valine from pyruvate: step 2/4. In terms of biological role, involved in the biosynthesis of branched-chain amino acids (BCAA). Catalyzes an alkyl-migration followed by a ketol-acid reduction of (S)-2-acetolactate (S2AL) to yield (R)-2,3-dihydroxy-isovalerate. In the isomerase reaction, S2AL is rearranged via a Mg-dependent methyl migration to produce 3-hydroxy-3-methyl-2-ketobutyrate (HMKB). In the reductase reaction, this 2-ketoacid undergoes a metal-dependent reduction by NADPH to yield (R)-2,3-dihydroxy-isovalerate. In Desulfitobacterium hafniense (strain DSM 10664 / DCB-2), this protein is Ketol-acid reductoisomerase (NADP(+)).